A 510-amino-acid polypeptide reads, in one-letter code: UDP-N-acetylmuramoyl-tripeptide--D-alanyl-D-alanine ligase (510 aa).

Residue 136–142 (GSSGKTS) coordinates ATP.

It belongs to the MurCDEF family. MurF subfamily.

It localises to the cytoplasm. It carries out the reaction D-alanyl-D-alanine + UDP-N-acetyl-alpha-D-muramoyl-L-alanyl-gamma-D-glutamyl-meso-2,6-diaminopimelate + ATP = UDP-N-acetyl-alpha-D-muramoyl-L-alanyl-gamma-D-glutamyl-meso-2,6-diaminopimeloyl-D-alanyl-D-alanine + ADP + phosphate + H(+). It participates in cell wall biogenesis; peptidoglycan biosynthesis. Its function is as follows. Involved in cell wall formation. Catalyzes the final step in the synthesis of UDP-N-acetylmuramoyl-pentapeptide, the precursor of murein. The sequence is that of UDP-N-acetylmuramoyl-tripeptide--D-alanyl-D-alanine ligase from Mycobacterium tuberculosis (strain CDC 1551 / Oshkosh).